Here is a 691-residue protein sequence, read N- to C-terminus: Threonine--tRNA ligase (691 aa).

The tract at residues 1 to 22 (MSVPAQPAPGADGGDPRQPIRV) is disordered. A TGS domain is found at 1-73 (MSVPAQPAPG…DADAEVTPIA (73 aa)). Residues 268–574 (DHRKLGVELD…LTEHYAGAFP (307 aa)) are catalytic. Cys373, His424, and His551 together coordinate Zn(2+).

The protein belongs to the class-II aminoacyl-tRNA synthetase family. Homodimer. Requires Zn(2+) as cofactor.

The protein resides in the cytoplasm. It carries out the reaction tRNA(Thr) + L-threonine + ATP = L-threonyl-tRNA(Thr) + AMP + diphosphate + H(+). Catalyzes the attachment of threonine to tRNA(Thr) in a two-step reaction: L-threonine is first activated by ATP to form Thr-AMP and then transferred to the acceptor end of tRNA(Thr). Also edits incorrectly charged L-seryl-tRNA(Thr). This chain is Threonine--tRNA ligase, found in Mycobacterium marinum (strain ATCC BAA-535 / M).